The sequence spans 157 residues: UPF0262 protein Rleg2_0240 (157 aa).

Belongs to the UPF0262 family.

This Rhizobium leguminosarum bv. trifolii (strain WSM2304) protein is UPF0262 protein Rleg2_0240.